The chain runs to 397 residues: Anhydro-N-acetylmuramic acid kinase (397 aa).

21-28 serves as a coordination point for ATP; that stretch reads GTSLDGVD. Residues 373-384 show a composition bias toward polar residues; sequence TPTNLPSVTGAS. The segment at 373 to 397 is disordered; it reads TPTNLPSVTGASARTPLGSLSVPGP.

It belongs to the anhydro-N-acetylmuramic acid kinase family.

The enzyme catalyses 1,6-anhydro-N-acetyl-beta-muramate + ATP + H2O = N-acetyl-D-muramate 6-phosphate + ADP + H(+). The protein operates within amino-sugar metabolism; 1,6-anhydro-N-acetylmuramate degradation. Its pathway is cell wall biogenesis; peptidoglycan recycling. Catalyzes the specific phosphorylation of 1,6-anhydro-N-acetylmuramic acid (anhMurNAc) with the simultaneous cleavage of the 1,6-anhydro ring, generating MurNAc-6-P. Is required for the utilization of anhMurNAc either imported from the medium or derived from its own cell wall murein, and thus plays a role in cell wall recycling. The sequence is that of Anhydro-N-acetylmuramic acid kinase from Salinibacter ruber (strain DSM 13855 / M31).